Here is a 78-residue protein sequence, read N- to C-terminus: MDFKQEVLDVLAEVCQDDIVKENPDIEIFEEGLLDSFGTVELLLAIENRFDILVPITEFDRDVWNTPNNIVNQLSELK.

A Carrier domain is found at 1–78; the sequence is MDFKQEVLDV…NIVNQLSELK (78 aa). Residue serine 36 is modified to O-(pantetheine 4'-phosphoryl)serine.

Belongs to the DltC family. Post-translationally, 4'-phosphopantetheine is transferred from CoA to a specific serine of apo-DCP.

It localises to the cytoplasm. Its pathway is cell wall biogenesis; lipoteichoic acid biosynthesis. Functionally, carrier protein involved in the D-alanylation of lipoteichoic acid (LTA). The loading of thioester-linked D-alanine onto DltC is catalyzed by D-alanine--D-alanyl carrier protein ligase DltA. The DltC-carried D-alanyl group is further transferred to cell membrane phosphatidylglycerol (PG) by forming an ester bond, probably catalyzed by DltD. D-alanylation of LTA plays an important role in modulating the properties of the cell wall in Gram-positive bacteria, influencing the net charge of the cell wall. This Bacillus subtilis (strain 168) protein is D-alanyl carrier protein.